The chain runs to 202 residues: Inner membrane-spanning protein YciB (202 aa).

The next 5 helical transmembrane spans lie at 47 to 67 (ILLA…WVHF), 75 to 95 (MLWV…AFQN), 101 to 121 (WKPT…AFIL), 146 to 166 (LSWI…AFNF), and 174 to 194 (FKLF…GMLL).

This sequence belongs to the YciB family.

The protein resides in the cell inner membrane. Functionally, plays a role in cell envelope biogenesis, maintenance of cell envelope integrity and membrane homeostasis. The chain is Inner membrane-spanning protein YciB from Dechloromonas aromatica (strain RCB).